A 159-amino-acid polypeptide reads, in one-letter code: Protein-export protein SecB (159 aa).

The protein belongs to the SecB family. In terms of assembly, homotetramer, a dimer of dimers. One homotetramer interacts with 1 SecA dimer.

The protein resides in the cytoplasm. One of the proteins required for the normal export of preproteins out of the cell cytoplasm. It is a molecular chaperone that binds to a subset of precursor proteins, maintaining them in a translocation-competent state. It also specifically binds to its receptor SecA. The sequence is that of Protein-export protein SecB from Burkholderia vietnamiensis (strain G4 / LMG 22486) (Burkholderia cepacia (strain R1808)).